Here is a 400-residue protein sequence, read N- to C-terminus: Phosphoglycerate kinase (400 aa).

Residues 21–23 (DFN), Arg-37, 60–63 (HLGR), Arg-121, and Arg-154 each bind substrate. ATP contacts are provided by residues Lys-204, Glu-326, and 355-358 (GGDS).

It belongs to the phosphoglycerate kinase family. In terms of assembly, monomer.

Its subcellular location is the cytoplasm. The catalysed reaction is (2R)-3-phosphoglycerate + ATP = (2R)-3-phospho-glyceroyl phosphate + ADP. The protein operates within carbohydrate degradation; glycolysis; pyruvate from D-glyceraldehyde 3-phosphate: step 2/5. This is Phosphoglycerate kinase from Chloroflexus aggregans (strain MD-66 / DSM 9485).